Here is a 419-residue protein sequence, read N- to C-terminus: Adenylosuccinate synthetase (419 aa).

GTP-binding positions include Gly11–Lys17 and Gly39–Ser41. The Proton acceptor role is filled by Asp12. 2 residues coordinate Mg(2+): Asp12 and Gly39. IMP is bound by residues Asp12–Lys15, Asn37–His40, Thr129, Arg143, Asn221, Thr236, and Arg296. The active-site Proton donor is the His40. Residue Val292–Arg298 coordinates substrate. GTP contacts are provided by residues Arg298, Lys324 to Asp326, and Gly408 to Gly410.

Belongs to the adenylosuccinate synthetase family. In terms of assembly, homodimer. Mg(2+) is required as a cofactor.

Its subcellular location is the cytoplasm. The enzyme catalyses IMP + L-aspartate + GTP = N(6)-(1,2-dicarboxyethyl)-AMP + GDP + phosphate + 2 H(+). It participates in purine metabolism; AMP biosynthesis via de novo pathway; AMP from IMP: step 1/2. Its function is as follows. Plays an important role in the de novo pathway and in the salvage pathway of purine nucleotide biosynthesis. Catalyzes the first committed step in the biosynthesis of AMP from IMP. In Chaetomium globosum (strain ATCC 6205 / CBS 148.51 / DSM 1962 / NBRC 6347 / NRRL 1970) (Soil fungus), this protein is Adenylosuccinate synthetase.